Consider the following 267-residue polypeptide: 4-hydroxy-tetrahydrodipicolinate reductase (267 aa).

Residues 12-17 (GPRGRM), 100-102 (GTT), and 126-129 (APNF) contribute to the NAD(+) site. Residue histidine 156 is the Proton donor/acceptor of the active site. Residue histidine 157 participates in (S)-2,3,4,5-tetrahydrodipicolinate binding. Residue lysine 160 is the Proton donor of the active site. 166–167 (GT) serves as a coordination point for (S)-2,3,4,5-tetrahydrodipicolinate.

It belongs to the DapB family.

It is found in the cytoplasm. It carries out the reaction (S)-2,3,4,5-tetrahydrodipicolinate + NAD(+) + H2O = (2S,4S)-4-hydroxy-2,3,4,5-tetrahydrodipicolinate + NADH + H(+). The catalysed reaction is (S)-2,3,4,5-tetrahydrodipicolinate + NADP(+) + H2O = (2S,4S)-4-hydroxy-2,3,4,5-tetrahydrodipicolinate + NADPH + H(+). It participates in amino-acid biosynthesis; L-lysine biosynthesis via DAP pathway; (S)-tetrahydrodipicolinate from L-aspartate: step 4/4. Catalyzes the conversion of 4-hydroxy-tetrahydrodipicolinate (HTPA) to tetrahydrodipicolinate. This chain is 4-hydroxy-tetrahydrodipicolinate reductase, found in Bacillus licheniformis (strain ATCC 14580 / DSM 13 / JCM 2505 / CCUG 7422 / NBRC 12200 / NCIMB 9375 / NCTC 10341 / NRRL NRS-1264 / Gibson 46).